Consider the following 124-residue polypeptide: Histone H2A (124 aa).

A compositionally biased stretch (basic residues) spans 1–18; that stretch reads MSGRGKGGKAKGKSKSRS. Residues 1 to 23 form a disordered region; that stretch reads MSGRGKGGKAKGKSKSRSSRAGL. Position 2 is an N-acetylserine (serine 2). Phosphoserine is present on serine 2. An N5-methylglutamine modification is found at glutamine 104.

The protein belongs to the histone H2A family. In terms of assembly, the nucleosome is a histone octamer containing two molecules each of H2A, H2B, H3 and H4 assembled in one H3-H4 heterotetramer and two H2A-H2B heterodimers. The octamer wraps approximately 147 bp of DNA. In terms of processing, the N-terminal serine is acetylated. That serine is also phosphorylated in approximately 60% of the molecules isolated from erythrocytes.

The protein resides in the nucleus. It localises to the chromosome. In terms of biological role, core component of nucleosome. Nucleosomes wrap and compact DNA into chromatin, limiting DNA accessibility to the cellular machineries which require DNA as a template. Histones thereby play a central role in transcription regulation, DNA repair, DNA replication and chromosomal stability. DNA accessibility is regulated via a complex set of post-translational modifications of histones, also called histone code, and nucleosome remodeling. The sequence is that of Histone H2A from Sipunculus nudus (Sipunculan worm).